A 48-amino-acid chain; its full sequence is Large ribosomal subunit protein bL33A (48 aa).

Belongs to the bacterial ribosomal protein bL33 family.

The protein is Large ribosomal subunit protein bL33A of Streptococcus pyogenes serotype M28 (strain MGAS6180).